The primary structure comprises 344 residues: Polycomb group RING finger protein 2 (344 aa).

The segment at 18-57 (CALCGGYFIDATTIVECLHSFCKTCIVRYLETNKYCPMCD) adopts an RING-type zinc-finger fold. Residues K51 and K88 each participate in a glycyl lysine isopeptide (Lys-Gly) (interchain with G-Cter in SUMO2) cross-link. A Nuclear localization signal motif is present at residues 81 to 95 (KLVPGLFKDEMKRRR). Residues 240 to 253 (TVPTPSEGTNTSGA) show a composition bias toward polar residues. The tract at residues 240 to 344 (TVPTPSEGTN…VNGAPVPPLT (105 aa)) is disordered. Residues 263–313 (APSPATLPATSSSLPSPATPSHGSPSSHGPPATHPTSPTPPSTASGATTAA) are compositionally biased toward low complexity. Residues 314-328 (NGGSLNCLQTPSSTS) show a composition bias toward polar residues. Residue T344 is modified to Phosphothreonine.

In terms of assembly, exists as both a monomer and homodimer. Component of a PRC1-like complex. Interacts with CBX8, RING1 and RNF2. Interacts with CBX7. Interacts with PHC2. In terms of processing, phosphorylated. Homodimer formation is regulated by phosphorylation with only unphosphorylated proteins forming homodimers. As to expression, detected in all tissues examined with high expression found in placenta lung and kidney and low expression, in liver, pancreas and skeletal muscle.

Its subcellular location is the nucleus. Its function is as follows. Transcriptional repressor. Binds specifically to the DNA sequence 5'-GACTNGACT-3'. Has tumor suppressor activity. May play a role in control of cell proliferation and/or neural cell development. Regulates proliferation of early T progenitor cells by maintaining expression of HES1. Also plays a role in antero-posterior specification of the axial skeleton and negative regulation of the self-renewal activity of hematopoietic stem cells. Component of a Polycomb group (PcG) multiprotein PRC1-like complex, a complex class required to maintain the transcriptionally repressive state of many genes, including Hox genes, throughout development. PcG PRC1 complex acts via chromatin remodeling and modification of histones; it mediates monoubiquitination of histone H2A 'Lys-119', rendering chromatin heritably changed in its expressibility. Within the PRC1-like complex, regulates RNF2 ubiquitin ligase activity. This Homo sapiens (Human) protein is Polycomb group RING finger protein 2 (PCGF2).